The chain runs to 432 residues: Neuronal pentraxin-1 (432 aa).

Positions 1–22 are cleaved as a signal peptide; it reads MLAGRAARTCALLALCLLGSRA. Residues 90 to 128 are disordered; sequence ESQSTLDAGPGEARSGGGRKQPGSGKNTMGDLSRTPASE. Asn-154 and Asn-193 each carry an N-linked (GlcNAc...) asparagine glycan. A Pentraxin (PTX) domain is found at 226 to 428; it reads DKFQLTFPLR…GATKWTFEAC (203 aa). Cys-256 and Cys-316 form a disulfide bridge. Residues Asn-280, Glu-358, Gln-359, Asp-360, and Gln-370 each coordinate Ca(2+).

Homooligomer or heterooligomer (probably pentamer) with neuronal pentraxin receptor (NPTXR). It depends on Ca(2+) as a cofactor. Glycosylated. In terms of tissue distribution, cerebellum, hippocampus and cerebral cortex.

It is found in the secreted. The protein localises to the cytoplasmic vesicle. Its subcellular location is the secretory vesicle. It localises to the endoplasmic reticulum. May be involved in mediating uptake of synaptic material during synapse remodeling or in mediating the synaptic clustering of AMPA glutamate receptors at a subset of excitatory synapses. The chain is Neuronal pentraxin-1 (Nptx1) from Rattus norvegicus (Rat).